Reading from the N-terminus, the 563-residue chain is MDIRRTVLWMIFSFSLLLLWNNWQIHNGKPSLFGGPAPEAAATQQPKADANGTAASSTASIPSSPAAAPAAASVPGAAAPAAAKSEQVVITTDVLRLTFDSNGAQLIRAELLKYPSSSQSDKPTVLMDRSADLVYVAQTGVVGAPQGESFPTHQTPFHLVSSERSLTGDTLDVVFEAESGGLKVTKTYTLHRGRYDVDVRHAMANTGGAPLNPALYLQLERDGTDPAGTSSFYHTFTGVAVYSEQDKFQKVTFSDIEKKKGTYIKQADNGWIGIVQHYFATAWIPAQGKQRTNELLQVQQNLYAARTIEAVGTIAPGSSANVDAHLWVGPQDQKAMAAVAPGLELVVDYGWLTIIAKPLFTLMTWLHGLLGNWGWTIVALTVIIKAVFFPLAAASYRSMARMKQVAPRLQALKEKYGDDRQKLNQAMMEMYRTEKINPLGGCLPMVVQIPVFIALYWVLLASVEMRGAPWILWVHDLSVRDPFFILPAIMMATMFLQIKLNPTPPDPVQAKVMMIMPLVFGGMMFFFPAGLVLYWCVNNTLSIAQQWTITRNLERQAAAAANR.

The chain crosses the membrane as a helical span at residues 6–26 (TVLWMIFSFSLLLLWNNWQIH). The tract at residues 36–70 (PAPEAAATQQPKADANGTAASSTASIPSSPAAAPA) is disordered. The segment covering 54-70 (AASSTASIPSSPAAAPA) has biased composition (low complexity). 4 consecutive transmembrane segments (helical) span residues 373–393 (WGWT…PLAA), 443–463 (LPMV…LASV), 482–502 (PFFI…KLNP), and 512–532 (VMMI…AGLV).

The protein belongs to the OXA1/ALB3/YidC family. Type 1 subfamily. Interacts with the Sec translocase complex via SecD. Specifically interacts with transmembrane segments of nascent integral membrane proteins during membrane integration.

It is found in the cell membrane. Required for the insertion and/or proper folding and/or complex formation of integral membrane proteins into the membrane. Involved in integration of membrane proteins that insert both dependently and independently of the Sec translocase complex, as well as at least some lipoproteins. Aids folding of multispanning membrane proteins. The protein is Membrane protein insertase YidC of Bordetella bronchiseptica (strain ATCC BAA-588 / NCTC 13252 / RB50) (Alcaligenes bronchisepticus).